We begin with the raw amino-acid sequence, 175 residues long: NADH-ubiquinone oxidoreductase chain 6 (175 aa).

Helical transmembrane passes span 1-21, 25-45, 47-67, 88-108, and 149-169; these read MMTY…VGFS, SPIY…GIIM, FGGS…MLVV, TVMG…LYVL, and YGAW…LVIL.

Belongs to the complex I subunit 6 family. As to quaternary structure, core subunit of respiratory chain NADH dehydrogenase (Complex I) which is composed of 45 different subunits.

It is found in the mitochondrion inner membrane. The enzyme catalyses a ubiquinone + NADH + 5 H(+)(in) = a ubiquinol + NAD(+) + 4 H(+)(out). Core subunit of the mitochondrial membrane respiratory chain NADH dehydrogenase (Complex I) which catalyzes electron transfer from NADH through the respiratory chain, using ubiquinone as an electron acceptor. Essential for the catalytic activity and assembly of complex I. In Equus caballus (Horse), this protein is NADH-ubiquinone oxidoreductase chain 6 (MT-ND6).